Reading from the N-terminus, the 190-residue chain is Protein GrpE (190 aa).

This sequence belongs to the GrpE family. Homodimer.

It localises to the cytoplasm. Functionally, participates actively in the response to hyperosmotic and heat shock by preventing the aggregation of stress-denatured proteins, in association with DnaK and GrpE. It is the nucleotide exchange factor for DnaK and may function as a thermosensor. Unfolded proteins bind initially to DnaJ; upon interaction with the DnaJ-bound protein, DnaK hydrolyzes its bound ATP, resulting in the formation of a stable complex. GrpE releases ADP from DnaK; ATP binding to DnaK triggers the release of the substrate protein, thus completing the reaction cycle. Several rounds of ATP-dependent interactions between DnaJ, DnaK and GrpE are required for fully efficient folding. The protein is Protein GrpE of Streptococcus agalactiae serotype III (strain NEM316).